We begin with the raw amino-acid sequence, 236 residues long: Lectin alpha chain (236 aa).

Residues Glu8 and Asp10 each coordinate Mn(2+). Positions 10, 12, 14, and 19 each coordinate Ca(2+). Residue Tyr12 coordinates a carbohydrate. Asp19, His24, and Ser34 together coordinate Mn(2+). 99 to 100 serves as a coordination point for a carbohydrate; that stretch reads LY. A Ca(2+)-binding site is contributed by Asp207. Arg227 contributes to the a carbohydrate binding site.

Belongs to the leguminous lectin family. In terms of assembly, equilibrium between homodimer and homotetramer. Oligomerization is pH-dependent with homotetramers forming at pH 6.5 and above. Post-translationally, the beta and gamma chains are produced by partial proteolytic processing of the lectin alpha chain by an asparaginyl endopeptidase. Mixture of 60% alpha lectin and 40% of its beta and gamma proteolytic fragments. In terms of tissue distribution, seed.

D-mannose/D-glucose-binding lectin. Has anti-inflammatory activity in rats. Induces histamine release in mast cells from rat. Induces lymphocyte proliferation and IFNG production. The chain is Lectin alpha chain from Cratylia argentea (Cratylia floribunda).